Reading from the N-terminus, the 330-residue chain is Lipoyl synthase (330 aa).

A disordered region spans residues 1–31; the sequence is MSDAPIATSSEVTQSPADYDPTKKQKSAEKT. The span at 7–16 shows a compositional bias: polar residues; the sequence is ATSSEVTQSP. Basic and acidic residues predominate over residues 20–31; it reads DPTKKQKSAEKT. 7 residues coordinate [4Fe-4S] cluster: C77, C82, C88, C103, C107, C110, and S317. One can recognise a Radical SAM core domain in the interval 88 to 306; the sequence is CFGKGTATFM…EEEAYKMGFT (219 aa).

This sequence belongs to the radical SAM superfamily. Lipoyl synthase family. It depends on [4Fe-4S] cluster as a cofactor.

It localises to the cytoplasm. The catalysed reaction is [[Fe-S] cluster scaffold protein carrying a second [4Fe-4S](2+) cluster] + N(6)-octanoyl-L-lysyl-[protein] + 2 oxidized [2Fe-2S]-[ferredoxin] + 2 S-adenosyl-L-methionine + 4 H(+) = [[Fe-S] cluster scaffold protein] + N(6)-[(R)-dihydrolipoyl]-L-lysyl-[protein] + 4 Fe(3+) + 2 hydrogen sulfide + 2 5'-deoxyadenosine + 2 L-methionine + 2 reduced [2Fe-2S]-[ferredoxin]. The protein operates within protein modification; protein lipoylation via endogenous pathway; protein N(6)-(lipoyl)lysine from octanoyl-[acyl-carrier-protein]: step 2/2. Its function is as follows. Catalyzes the radical-mediated insertion of two sulfur atoms into the C-6 and C-8 positions of the octanoyl moiety bound to the lipoyl domains of lipoate-dependent enzymes, thereby converting the octanoylated domains into lipoylated derivatives. The polypeptide is Lipoyl synthase (Cupriavidus metallidurans (strain ATCC 43123 / DSM 2839 / NBRC 102507 / CH34) (Ralstonia metallidurans)).